The following is a 647-amino-acid chain: MPIIESSQSLLLDKDKLKRILLTIPSEPGCYLMRDKNETLLYIGKSKSLKSRVRSYFNTNNTALSPRISLMVRQVYDIEFILTDSDSEALNLESNLIKEHQPYFNILLKDDKKYPYLCITWSEEYPRIFITRRRRLRNSEDRYYGPYVDVTLLRKTLFLLKKLFPLRQRPRALYKDRTCLNYSINRCPGVCQRLIEPDDYHKTLKKVAMIFEGRTDQLKDLLHKQMLIQSKLQEFEKAAIIRDQIKGIEQLYAAQKMTIPDSTVSRDVLGLSIDSNVCCVQLFQMRAGKLVGRIGFVYNSLELRSELILQKVLEEYYSQIDNVTIPPEILLQSSIPQQSYFEQWLSELRGSQVKIVIPKRKEKAELVKLVKRNADIELERVKDGQSKHLIELEDLTQVLDLAFVPRRIEGYDISHLAGTEVVGSQVVFIEGIPAKQHYRKYAIKSSSISSGHSDDYMALAEVIRRRFRRWSKYKADGLDLTELRNKKLSSLDPLIITDWPDLIMIDGGKGQLKAVEEALRQLGLDSDINVCSLAKRNEEIFVPGSYNKLDTEKNQPGLLLLRRLRDEAHRFAINFHRKKRSLSMKRSQLIDIPGVGPRRIKSLLAHFKSVQAIQLATEKEIASVEGLGTETASIIFKYFNPIERDIV.

The 81-residue stretch at 26–106 (SEPGCYLMRD…IKEHQPYFNI (81 aa)) folds into the GIY-YIG domain. One can recognise a UVR domain in the interval 216-251 (DQLKDLLHKQMLIQSKLQEFEKAAIIRDQIKGIEQL).

This sequence belongs to the UvrC family. In terms of assembly, interacts with UvrB in an incision complex.

Its subcellular location is the cytoplasm. Functionally, the UvrABC repair system catalyzes the recognition and processing of DNA lesions. UvrC both incises the 5' and 3' sides of the lesion. The N-terminal half is responsible for the 3' incision and the C-terminal half is responsible for the 5' incision. In Prochlorococcus marinus (strain MIT 9211), this protein is UvrABC system protein C.